The chain runs to 299 residues: MTDNTRLRIAMQKSGRLSDDSRELLARCGIKINLHTQRLIAMAENMPIDILRVRDDDIPGLVMDGVVDLGIIGENVLEEELLNRRAQGEDPRYFTLRRLDFGGCRLSLATPVDEAWDGPLSLNGKRIATSYPHLLKRYLDQKGISFKSCLLNGSVEVAPRAGLADAICDLVSTGATLEANGLREVEVIYRSKACLIQRDGEMEESKQQLIDKLLTRIQGVIQARESKYIMMHAPTERLDEVIALLPGAERPTILPLAGDQQRVAMHMVSSETLFWETMEKLKALGASSILVLPIEKMME.

It belongs to the ATP phosphoribosyltransferase family. Long subfamily. In terms of assembly, equilibrium between an active dimeric form, an inactive hexameric form and higher aggregates. Interconversion between the various forms is largely reversible and is influenced by the natural substrates and inhibitors of the enzyme. The cofactor is Mg(2+).

It is found in the cytoplasm. The catalysed reaction is 1-(5-phospho-beta-D-ribosyl)-ATP + diphosphate = 5-phospho-alpha-D-ribose 1-diphosphate + ATP. Its pathway is amino-acid biosynthesis; L-histidine biosynthesis; L-histidine from 5-phospho-alpha-D-ribose 1-diphosphate: step 1/9. Feedback inhibited by histidine. Catalyzes the condensation of ATP and 5-phosphoribose 1-diphosphate to form N'-(5'-phosphoribosyl)-ATP (PR-ATP). Has a crucial role in the pathway because the rate of histidine biosynthesis seems to be controlled primarily by regulation of HisG enzymatic activity. This is ATP phosphoribosyltransferase from Escherichia coli O8 (strain IAI1).